Reading from the N-terminus, the 311-residue chain is Tyrosine recombinase XerD (311 aa).

A Core-binding (CB) domain is found at 3–88 (DMSAAYVEAF…ALRQFYKFLY (86 aa)). The 190-residue stretch at 109 to 298 (TLPKTLSIED…LEERLHDLVQ (190 aa)) folds into the Tyr recombinase domain. Residues Arg156, Lys180, His250, Arg253, and His276 contribute to the active site. Residue Tyr285 is the O-(3'-phospho-DNA)-tyrosine intermediate of the active site.

This sequence belongs to the 'phage' integrase family. XerD subfamily. In terms of assembly, forms a cyclic heterotetrameric complex composed of two molecules of XerC and two molecules of XerD.

It is found in the cytoplasm. Its function is as follows. Site-specific tyrosine recombinase, which acts by catalyzing the cutting and rejoining of the recombining DNA molecules. The XerC-XerD complex is essential to convert dimers of the bacterial chromosome into monomers to permit their segregation at cell division. It also contributes to the segregational stability of plasmids. The polypeptide is Tyrosine recombinase XerD (Rhizobium meliloti (strain 1021) (Ensifer meliloti)).